We begin with the raw amino-acid sequence, 742 residues long: Synaptic vesicle glycoprotein 2A (742 aa).

Positions 1-57 are interaction with SYT1; that stretch reads MEEGFRDRAAFIRGAKDIAKEVKKHAAKKVVKGLDRVQDEYSRRSYSRFEEEEDDDD. Topologically, residues 1-169 are cytoplasmic; it reads MEEGFRDRAA…GHGRFQWTLY (169 aa). Positions 40–49 are enriched in basic and acidic residues; that stretch reads EYSRRSYSRF. The tract at residues 40 to 145 is disordered; that stretch reads EYSRRSYSRF…RGEAQRRKDR (106 aa). Phosphoserine occurs at positions 80 and 81. Thr84 carries the post-translational modification Phosphothreonine. A compositionally biased stretch (gly residues) spans 122–137; that stretch reads VRGGLSDGEGPPGGRG. Ser127 carries the post-translational modification Phosphoserine. The helical transmembrane segment at 170–190 threads the bilayer; that stretch reads FVLGLALMADGVEVFVVGFVL. The Extracellular segment spans residues 191–205; sequence PSAEKDMCLSDSNKG. Residues 206-226 form a helical membrane-spanning segment; it reads MLGLIVYLGMMVGAFLWGGLA. Over 227-233 the chain is Cytoplasmic; it reads DRLGRRQ. Residues 234-254 form a helical membrane-spanning segment; it reads CLLISLSVNSVFAFFSSFVQG. The Extracellular portion of the chain corresponds to 255–262; the sequence is YGTFLFCR. The helical transmembrane segment at 263 to 283 threads the bilayer; the sequence is LLSGVGIGGSIPIVFSYFSEF. Over 284–294 the chain is Cytoplasmic; that stretch reads LAQEKRGEHLS. The chain crosses the membrane as a helical span at residues 295 to 315; that stretch reads WLCMFWMIGGVYAAAMAWAII. Residues 316–334 lie on the Extracellular side of the membrane; it reads PHYGWSFQMGSAYQFHSWR. A helical transmembrane segment spans residues 335–355; the sequence is VFVLVCAFPSVFAIGALTTQP. Over 356-447 the chain is Cytoplasmic; that stretch reads ESPRFFLENG…CFSPEYRRIT (92 aa). Position 393 is a phosphoserine (Ser393). The helical transmembrane segment at 448-468 threads the bilayer; that stretch reads LMMMGVWFTMSFSYYGLTVWF. Residues 469–598 are Extracellular-facing; that stretch reads PDMIRHLQAV…GTGEGAYMVY (130 aa). Tyr480 is subject to Phosphotyrosine. Asn498 and Asn548 each carry an N-linked (GlcNAc...) asparagine glycan. Asn573 carries N-linked (GlcNAc...) asparagine; alternate glycosylation. N-linked (HexNAc...) asparagine; alternate glycosylation is present at Asn573. The chain crosses the membrane as a helical span at residues 599–619; that stretch reads FVSFLGTLAVLPGNIVSALLM. At 620-626 the chain is on the cytoplasmic side; that stretch reads DKIGRLR. The chain crosses the membrane as a helical span at residues 627–647; the sequence is MLAGSSVLSCVSCFFLSFGNS. Residues 648–651 lie on the Extracellular side of the membrane; that stretch reads ESAM. The helical transmembrane segment at 652–672 threads the bilayer; the sequence is IALLCLFGGVSIASWNALDVL. Over 673-685 the chain is Cytoplasmic; it reads TVELYPSDKRTTA. The helical transmembrane segment at 686–708 threads the bilayer; sequence FGFLNALCKLAAVLGISIFTSFV. Over 709–712 the chain is Extracellular; that stretch reads GITK. The chain crosses the membrane as a helical span at residues 713 to 731; sequence AAPILFASAALALGSSLAL. Topologically, residues 732-742 are cytoplasmic; the sequence is KLPETRGQVLQ.

This sequence belongs to the major facilitator superfamily. In terms of assembly, interacts with SYT1/synaptotagmin-1 in a calcium-dependent manner. Binds the adapter protein complex AP-2. (Microbial infection) Interacts with C.botulinum neurotoxin type A1 and type A2 (BoNT/A, botA). Interaction is improved by glycosylation of SV2. As to quaternary structure, (Microbial infection) Copurifies with C.botulinum neurotoxin type B (BoNT/B, botB) and synaptotagmin 1 (SYT1). Interaction does not require glycosylation of SV2 or SYT1 proteins. Another group finds only copurification with SYT1 and SYT2. In terms of assembly, (Microbial infection) Interacts with C.botulinum neurotoxin type E (BoNT/E). Interaction requires glycosylation of SV2 proteins. (Microbial infection) Copurifies with C.botulinum neurotoxin type F (BoNT/F) and synaptotagmin 1 (SYT2). Another group finds only copurification with BoNT/F. Interaction requires SV2 glycosylation. Post-translationally, phosphorylation by CK1 of the N-terminal cytoplasmic domain regulates interaction with SYT1. N-glycosylated, on at least 3 residues. As to expression, widely expressed throughout the brain (at protein level). Expressed by neural and endocrine cells of brain and spinal cord.

The protein localises to the presynapse. Its subcellular location is the cytoplasmic vesicle. It is found in the secretory vesicle. It localises to the synaptic vesicle membrane. Functionally, plays a role in the control of regulated secretion in neural and endocrine cells, enhancing selectively low-frequency neurotransmission. Positively regulates vesicle fusion by maintaining the readily releasable pool of secretory vesicles. Its function is as follows. (Microbial infection) Receptor for C.botulinum neurotoxin type A (BoNT/A, botA); the toxin binds via extracellular loop 4. Restores uptake of BoNT/A in mouse cells that are deleted for SV2 receptor. Glycosylation of Asn-573 is not essential for receptor activity, but enhances uptake. Also serves as a receptor for the closely related C.botulinum neurotoxin type A2; glycosylation is not essential but enhances the interaction. Possible receptor for C.botulinum neurotoxin type D (BoNT/D, botD); BoNT/D does not bind to extracellular loop 4 as do BoNT/A and BoNT/E, nor to loop 1 or loop 3. Another group does not find a convincing interaction with SV2. In terms of biological role, (Microbial infection) Receptor for C.botulinum neurotoxin type E (BoNT/E); the toxin probably binds via extracellular loop 4 and requires glycosylation of Asn-573. Restores uptake of BoNT/E in mouse cells that are deleted for SV2 receptor. Functionally, (Microbial infection) Receptor for C.botulinum neurotoxin type F (BoNT/F). Binding requires glycosylation of Asn-573. The polypeptide is Synaptic vesicle glycoprotein 2A (Sv2a) (Rattus norvegicus (Rat)).